A 274-amino-acid polypeptide reads, in one-letter code: Serine protease 28 (274 aa).

The first 26 residues, 1 to 26, serve as a signal peptide directing secretion; sequence MFRLLLLALSCLESTVFMASVSISRS. In terms of domain architecture, Peptidase S1 spans 31–274; that stretch reads IVGGQRTPPG…SLAWIHQHIQ (244 aa). A disulfide bridge links Cys-62 with Cys-78. The active-site Charge relay system is the His-77. Asn-106 carries N-linked (GlcNAc...) asparagine glycosylation. Asp-124 acts as the Charge relay system in catalysis. 3 disulfides stabilise this stretch: Cys-158–Cys-233, Cys-191–Cys-214, and Cys-223–Cys-251. The Charge relay system role is filled by Ser-227.

It belongs to the peptidase S1 family. As to quaternary structure, homooligomer, heterodimer and heterotetramer. Able to form homo- and hetero- tetrameric structures. Heterotetramer is far more stable than the homotetramer. As to expression, expressed in embryos throughout the preimplantation period, during blastocyst hatching and embryo outgrowth. Found in uterus especially in glandular epithelium.

The protein resides in the secreted. With respect to regulation, inhibited by benzamidine, (4-amidino-phenyl)-methane-sulfonyl (APMSF), N-p-tosyl-L-lysine chloromethylketone (TLCK), gabexate, mesylate, BABIM and trypsin soybean inhibitor (TSI). Involved in embryo hatching and implantation. The chain is Serine protease 28 (Prss28) from Mus musculus (Mouse).